The primary structure comprises 272 residues: 3-methyl-2-oxobutanoate hydroxymethyltransferase (272 aa).

Mg(2+) is bound by residues D52 and D91. 3-methyl-2-oxobutanoate contacts are provided by residues 52 to 53 (DS), D91, and K121. Residue E123 coordinates Mg(2+). E190 serves as the catalytic Proton acceptor.

It belongs to the PanB family. Homodecamer; pentamer of dimers. Requires Mg(2+) as cofactor.

It localises to the cytoplasm. It carries out the reaction 3-methyl-2-oxobutanoate + (6R)-5,10-methylene-5,6,7,8-tetrahydrofolate + H2O = 2-dehydropantoate + (6S)-5,6,7,8-tetrahydrofolate. The protein operates within cofactor biosynthesis; (R)-pantothenate biosynthesis; (R)-pantoate from 3-methyl-2-oxobutanoate: step 1/2. In terms of biological role, catalyzes the reversible reaction in which hydroxymethyl group from 5,10-methylenetetrahydrofolate is transferred onto alpha-ketoisovalerate to form ketopantoate. This chain is 3-methyl-2-oxobutanoate hydroxymethyltransferase, found in Flavobacterium johnsoniae (strain ATCC 17061 / DSM 2064 / JCM 8514 / BCRC 14874 / CCUG 350202 / NBRC 14942 / NCIMB 11054 / UW101) (Cytophaga johnsonae).